The chain runs to 236 residues: Purine nucleoside phosphorylase DeoD-type (236 aa).

Residue His-4 participates in a purine D-ribonucleoside binding. Residues Gly-20, Arg-24, Arg-43, and 87–90 contribute to the phosphate site; that span reads RVGT. Residues 178-180 and 202-203 each bind a purine D-ribonucleoside; these read EME and SD. Asp-203 functions as the Proton donor in the catalytic mechanism.

The protein belongs to the PNP/UDP phosphorylase family. As to quaternary structure, homohexamer; trimer of homodimers.

The catalysed reaction is a purine D-ribonucleoside + phosphate = a purine nucleobase + alpha-D-ribose 1-phosphate. The enzyme catalyses a purine 2'-deoxy-D-ribonucleoside + phosphate = a purine nucleobase + 2-deoxy-alpha-D-ribose 1-phosphate. Its function is as follows. Catalyzes the reversible phosphorolytic breakdown of the N-glycosidic bond in the beta-(deoxy)ribonucleoside molecules, with the formation of the corresponding free purine bases and pentose-1-phosphate. The chain is Purine nucleoside phosphorylase DeoD-type from Geobacillus kaustophilus (strain HTA426).